Here is a 1252-residue protein sequence, read N- to C-terminus: Myosin-3 (1252 aa).

The Myosin motor domain occupies 36–715 (VGVSDLTLLS…TLFALENMRD (680 aa)). 129–136 (GESGAGKT) serves as a coordination point for ATP. A Phosphoserine modification is found at S357. Residues 404–486 (SIGILDIYGF…PGIFAAMNDA (83 aa)) form an actin-binding region. IQ domains follow at residues 719–739 (YNMA…RIDA) and 740–767 (AIRI…AGDK). Residues 773 to 963 (KERRNMSLLG…TILVRHGNPP (191 aa)) form the TH1 domain. Disordered stretches follow at residues 988-1086 (KTMK…KTSV), 1106-1136 (YSLP…PSEL), and 1203-1252 (INEP…DDDW). The span at 997-1016 (KRTPQALPTSSLAASAAQAA) shows a compositional bias: low complexity. Polar residues-rich tracts occupy residues 1050 to 1063 (PVRN…NSKV), 1106 to 1121 (YSLP…TDSY), and 1203 to 1219 (INEP…NTDL). The region spanning 1116 to 1178 (SQTDSYQAAY…PTSYIVKYNG (63 aa)) is the SH3 domain. Over residues 1238-1252 (SEEDISREEDDDDDW) the composition is skewed to acidic residues.

It belongs to the TRAFAC class myosin-kinesin ATPase superfamily. Myosin family. Phosphorylation of the TEDS site (Ser-357) is required for the polarization of the actin cytoskeleton. Phosphorylation probably activates the myosin-I ATPase activity.

The protein localises to the cytoplasm. Its subcellular location is the cytoskeleton. The protein resides in the actin patch. Type-I myosin implicated in the organization of the actin cytoskeleton. Required for proper actin cytoskeleton polarization. At the cell cortex, assembles in patch-like structures together with proteins from the actin-polymerizing machinery and promotes actin assembly. Functions as actin nucleation-promoting factor (NPF) for the Arp2/3 complex. The sequence is that of Myosin-3 (MYO3) from Candida glabrata (strain ATCC 2001 / BCRC 20586 / JCM 3761 / NBRC 0622 / NRRL Y-65 / CBS 138) (Yeast).